We begin with the raw amino-acid sequence, 488 residues long: Solute carrier family 41 member 3 (488 aa).

2 stretches are compositionally biased toward basic and acidic residues: residues 1–19 and 27–36; these read MEGT…RLKE and DAGRLPKASE. Positions 1-36 are disordered; sequence MEGTEARQRRLEGCGRLKELGPLPSHDAGRLPKASE. Helical transmembrane passes span 63–83, 147–167, 189–209, 220–240, 251–271, 284–304, 377–397, 406–426, and 450–470; these read LIIG…LSWA, LAVV…ASLM, VITA…IVIG, IATP…LALM, WYLT…WLFI, YGWF…LILS, VLLF…CLVE, IFIL…LYLA, and GLGD…DWLL.

This sequence belongs to the SLC41A transporter family.

It localises to the mitochondrion inner membrane. The enzyme catalyses Mg(2+)(in) + 2 Na(+)(out) = Mg(2+)(out) + 2 Na(+)(in). Functionally, na(+)/Mg(2+) ion exchanger that acts as a predominant Mg(2+) efflux system at the mitochondrial inner membrane. The polypeptide is Solute carrier family 41 member 3 (Slc41a3) (Mus musculus (Mouse)).